The primary structure comprises 141 residues: Nucleoside diphosphate kinase (141 aa).

6 residues coordinate ATP: lysine 11, phenylalanine 59, arginine 87, threonine 93, arginine 104, and asparagine 114. Residue histidine 117 is the Pros-phosphohistidine intermediate of the active site.

This sequence belongs to the NDK family. As to quaternary structure, homotetramer. Mg(2+) serves as cofactor.

The protein resides in the cytoplasm. It catalyses the reaction a 2'-deoxyribonucleoside 5'-diphosphate + ATP = a 2'-deoxyribonucleoside 5'-triphosphate + ADP. The enzyme catalyses a ribonucleoside 5'-diphosphate + ATP = a ribonucleoside 5'-triphosphate + ADP. In terms of biological role, major role in the synthesis of nucleoside triphosphates other than ATP. The ATP gamma phosphate is transferred to the NDP beta phosphate via a ping-pong mechanism, using a phosphorylated active-site intermediate. The polypeptide is Nucleoside diphosphate kinase (Pseudomonas putida (strain ATCC 47054 / DSM 6125 / CFBP 8728 / NCIMB 11950 / KT2440)).